A 74-amino-acid polypeptide reads, in one-letter code: U3-agatoxin-Ao1b (74 aa).

The first 20 residues, 1-20 (MKAAISLIIFFAILFVVIEA), serve as a signal peptide directing secretion. The propeptide occupies 21–34 (ISYEEGKELFQKER). 4 cysteine pairs are disulfide-bonded: C37–C53, C44–C58, C52–C68, and C60–C66. S72 is modified (serine amide).

This sequence belongs to the neurotoxin 07 (Beta/delta-agtx) family. 02 (aga-3) subfamily. As to expression, expressed by the venom gland.

It localises to the secreted. Its function is as follows. Insecticidal neurotoxin that induces an irreversible spastic paralysis when injected into insects. Modifies presynaptic voltage-gated sodium channels (Nav), causing them to open at the normal resting potential of the nerve. This leads to spontaneous release of neurotransmitter and repetitive action potentials in motor neurons. The polypeptide is U3-agatoxin-Ao1b (Agelena orientalis (Funnel-web spider)).